Consider the following 159-residue polypeptide: Transcription antitermination protein NusB (159 aa).

The tract at residues 1–20 (MNKNTQGKPSGKPVRRDGVD) is disordered.

This sequence belongs to the NusB family.

Its function is as follows. Involved in transcription antitermination. Required for transcription of ribosomal RNA (rRNA) genes. Binds specifically to the boxA antiterminator sequence of the ribosomal RNA (rrn) operons. The sequence is that of Transcription antitermination protein NusB from Stenotrophomonas maltophilia (strain R551-3).